The following is a 172-amino-acid chain: MDSPSLRELQQPLLEGTECETPAQKPGRHELGSPLREIAFAESLRGLQFLSPPLPSVSAGLGEPRPPDVEDMSSSDSDSDWDGGSRLSPFLPHDHLGLAVFSMLCCFWPVGIAAFCLAQKTNKAWAKGDIQGAGAASRRAFLLGVLAVGLGVCTYAAALVTLAAYLASRDPP.

Disordered stretches follow at residues 1–31 (MDSP…RHEL) and 55–83 (PSVS…DWDG). Residues 1-97 (MDSPSLRELQ…SPFLPHDHLG (97 aa)) are Extracellular-facing. Residues 69-81 (VEDMSSSDSDSDW) show a composition bias toward acidic residues. The helical transmembrane segment at 98–118 (LAVFSMLCCFWPVGIAAFCLA) threads the bilayer. Over 119 to 139 (QKTNKAWAKGDIQGAGAASRR) the chain is Cytoplasmic. The helical transmembrane segment at 140–160 (AFLLGVLAVGLGVCTYAAALV) threads the bilayer. At 161 to 172 (TLAAYLASRDPP) the chain is on the extracellular side.

This sequence belongs to the CD225/Dispanin family.

It localises to the membrane. This Homo sapiens (Human) protein is Transmembrane protein 91 (TMEM91).